Reading from the N-terminus, the 117-residue chain is Large ribosomal subunit protein bL19 (117 aa).

It belongs to the bacterial ribosomal protein bL19 family.

In terms of biological role, this protein is located at the 30S-50S ribosomal subunit interface and may play a role in the structure and function of the aminoacyl-tRNA binding site. This is Large ribosomal subunit protein bL19 from Mycoplasmopsis pulmonis (strain UAB CTIP) (Mycoplasma pulmonis).